The following is a 316-amino-acid chain: 4-hydroxy-3-methylbut-2-enyl diphosphate reductase (316 aa).

Cys12 serves as a coordination point for [4Fe-4S] cluster. (2E)-4-hydroxy-3-methylbut-2-enyl diphosphate contacts are provided by His43 and His81. Dimethylallyl diphosphate-binding residues include His43 and His81. Residues His43 and His81 each contribute to the isopentenyl diphosphate site. A [4Fe-4S] cluster-binding site is contributed by Cys103. His131 is a (2E)-4-hydroxy-3-methylbut-2-enyl diphosphate binding site. His131 contacts dimethylallyl diphosphate. His131 is a binding site for isopentenyl diphosphate. Catalysis depends on Glu133, which acts as the Proton donor. Thr170 is a (2E)-4-hydroxy-3-methylbut-2-enyl diphosphate binding site. [4Fe-4S] cluster is bound at residue Cys198. The (2E)-4-hydroxy-3-methylbut-2-enyl diphosphate site is built by Ser226, Asn228, and Ser271. Residues Ser226, Asn228, and Ser271 each coordinate dimethylallyl diphosphate. Isopentenyl diphosphate is bound by residues Ser226, Asn228, and Ser271.

The protein belongs to the IspH family. Requires [4Fe-4S] cluster as cofactor.

The enzyme catalyses isopentenyl diphosphate + 2 oxidized [2Fe-2S]-[ferredoxin] + H2O = (2E)-4-hydroxy-3-methylbut-2-enyl diphosphate + 2 reduced [2Fe-2S]-[ferredoxin] + 2 H(+). It carries out the reaction dimethylallyl diphosphate + 2 oxidized [2Fe-2S]-[ferredoxin] + H2O = (2E)-4-hydroxy-3-methylbut-2-enyl diphosphate + 2 reduced [2Fe-2S]-[ferredoxin] + 2 H(+). It participates in isoprenoid biosynthesis; dimethylallyl diphosphate biosynthesis; dimethylallyl diphosphate from (2E)-4-hydroxy-3-methylbutenyl diphosphate: step 1/1. The protein operates within isoprenoid biosynthesis; isopentenyl diphosphate biosynthesis via DXP pathway; isopentenyl diphosphate from 1-deoxy-D-xylulose 5-phosphate: step 6/6. Functionally, catalyzes the conversion of 1-hydroxy-2-methyl-2-(E)-butenyl 4-diphosphate (HMBPP) into a mixture of isopentenyl diphosphate (IPP) and dimethylallyl diphosphate (DMAPP). Acts in the terminal step of the DOXP/MEP pathway for isoprenoid precursor biosynthesis. This is 4-hydroxy-3-methylbut-2-enyl diphosphate reductase from Bacillus cereus (strain AH820).